Here is a 374-residue protein sequence, read N- to C-terminus: 12-oxophytodienoate reductase 2 (374 aa).

Residue Met-1 is modified to N-acetylmethionine. FMN-binding positions include 33-35, Ala-66, and Gln-108; that span reads PLT. His-185 provides a ligand contact to substrate. Residue Tyr-190 is the Proton donor of the active site. Arg-237 lines the FMN pocket. Arg-277 lines the substrate pocket. FMN-binding positions include 305–307 and 328–329; these read AGG and GR.

This sequence belongs to the NADH:flavin oxidoreductase/NADH oxidase family. FMN is required as a cofactor. In terms of tissue distribution, expressed at highest levels in roots and cotyledons, and at lower levels in leaves, shoots and flowers (sepals, petals, maturing siliques and developing pollen).

The protein localises to the cytoplasm. The enzyme catalyses (1S,2S)-OPC-8 + NADP(+) = (9S,13S,15Z)-12-oxophyto-10,15-dienoate + NADPH + H(+). The catalysed reaction is a 4,5-didehydrojasmonate + NADPH + H(+) = a jasmonate + NADP(+). It participates in lipid metabolism; oxylipin biosynthesis. Its function is as follows. Specifically cleaves olefinic bonds in alpha,beta-unsaturated carbonyls and may be involved in detoxification or modification of these reactive compounds. May be involved in the biosynthesis or metabolism of oxylipin signaling molecules. In vitro, reduces 9R,13R-12-oxophytodienoic acid (9R,13R-OPDA) to 9R,13R-OPC-8:0, but only poorly 9S,13S-OPDA, the natural precursor of jasmonic acid (JA). Can detoxify the explosive 2,4,6-trinitrotoluene (TNT) in vitro and in vivo by catalyzing its nitroreduction to form hydroxylamino-dinitrotoluene (HADNT). Functions in an alternative and OPR3-independent pathway for JA biosynthesis. Catalyzes the NADPH-dependent reduction of 4,5-didehydrojasmonates to jasmonates. The polypeptide is 12-oxophytodienoate reductase 2 (Arabidopsis thaliana (Mouse-ear cress)).